The primary structure comprises 304 residues: Putative S-adenosyl-L-methionine-dependent methyltransferase MUL_0816 (304 aa).

S-adenosyl-L-methionine is bound by residues D130 and 159-160 (DL).

This sequence belongs to the UPF0677 family.

Functionally, exhibits S-adenosyl-L-methionine-dependent methyltransferase activity. This Mycobacterium ulcerans (strain Agy99) protein is Putative S-adenosyl-L-methionine-dependent methyltransferase MUL_0816.